We begin with the raw amino-acid sequence, 452 residues long: Probable 1,4-beta-D-glucan cellobiohydrolase A (452 aa).

Positions 1 to 17 are cleaved as a signal peptide; the sequence is MHQRALLFSALAVAANA. N81 is a glycosylation site (N-linked (GlcNAc...) asparagine). Catalysis depends on E226, which acts as the Nucleophile. E231 (proton donor) is an active-site residue. Residue N284 is glycosylated (N-linked (GlcNAc...) asparagine). Positions 405–431 are disordered; it reads ADPSKPGVARGTCEHGAGDPENVESQH.

This sequence belongs to the glycosyl hydrolase 7 (cellulase C) family.

Its subcellular location is the secreted. It carries out the reaction Hydrolysis of (1-&gt;4)-beta-D-glucosidic linkages in cellulose and cellotetraose, releasing cellobiose from the non-reducing ends of the chains.. Functionally, the biological conversion of cellulose to glucose generally requires three types of hydrolytic enzymes: (1) Endoglucanases which cut internal beta-1,4-glucosidic bonds; (2) Exocellobiohydrolases that cut the disaccharide cellobiose from the non-reducing end of the cellulose polymer chain; (3) Beta-1,4-glucosidases which hydrolyze the cellobiose and other short cello-oligosaccharides to glucose. The protein is Probable 1,4-beta-D-glucan cellobiohydrolase A (cbhA) of Aspergillus fumigatus (strain CBS 144.89 / FGSC A1163 / CEA10) (Neosartorya fumigata).